We begin with the raw amino-acid sequence, 132 residues long: uncharacterized protein (132 aa).

2 disordered regions span residues 36–69 and 97–132; these read GLAS…PNIS and QIND…PTAR. S101 bears the Phosphoserine mark.

In terms of assembly, copurifies with proteins HOL1, MMP1, PEX7 and PLB1.

This is an uncharacterized protein from Saccharomyces cerevisiae (strain ATCC 204508 / S288c) (Baker's yeast).